Here is a 1073-residue protein sequence, read N- to C-terminus: Collagen alpha-2(I) chain (1073 aa).

The interval A1–V939 is disordered. Low complexity-rich tracts occupy residues E100–P148, E178–P187, and P194–P215. Positions F217 to Q227 are enriched in pro residues. The segment covering P229 to A239 has biased composition (low complexity). Positions G246–G255 are enriched in gly residues. Low complexity-rich tracts occupy residues M296–A315, S321–A348, A386–T399, and Q411–P423. Gly residues predominate over residues G424–G433. Over residues N458 to Q468 the composition is skewed to low complexity. Residues G481 to G508 show a composition bias toward gly residues. Residues K519 to P530 show a composition bias toward basic and acidic residues. Composition is skewed to low complexity over residues S561–A575 and P584–D597. Over residues G607–G616 the composition is skewed to gly residues. Low complexity-rich tracts occupy residues P617–R642, F653–K680, and S708–L729. Over residues G745 to G757 the composition is skewed to gly residues. Residues R758–P774 are compositionally biased toward low complexity. A compositionally biased stretch (gly residues) spans G811 to G820. Residues A821–P836 are compositionally biased toward low complexity. The segment covering R837 to L851 has biased composition (basic and acidic residues). 2 stretches are compositionally biased toward low complexity: residues L857–N876 and P906–P917. A compositionally biased stretch (pro residues) spans A918–P932. The 35-residue stretch at R1039 to K1073 folds into the Fibrillar collagen NC1 domain.

Belongs to the fibrillar collagen family.

Its subcellular location is the secreted. It is found in the extracellular space. It localises to the extracellular matrix. The polypeptide is Collagen alpha-2(I) chain (Epinephelus aeneus (White grouper)).